A 1054-amino-acid chain; its full sequence is NACHT, LRR and PYD domains-containing protein 12 (1054 aa).

The region spanning 1–95 (MLPSTARDGL…WERGQGEDLV (95 aa)) is the Pyrin domain. In terms of domain architecture, FISNA spans 129–201 (YKDYVRRKFQ…SPIQMETLFE (73 aa)). The 318-residue stretch at 211-528 (HTVVLQGAAG…EFFAAMYCAL (318 aa)) folds into the NACHT domain. 217–224 (GAAGMGKS) serves as a coordination point for ATP. 8 LRR repeats span residues 821–841 (YLVELDLTGNPLEDSGLKLLC), 850–871 (RLRTLWLKICHLGQASCEDLAS), 878–899 (SLLELDLGLNDLGDSGVLLLCE), 907–928 (KLQTLRLGICRLGSVACVGIAS), 935–955 (CLQELDLSFNDLGDRGLQLLG), 964–985 (RLQKLWLDNCGLTSKACEDLSS), 992–1013 (TLHELYLTNNALGDTGVCLLCK), and 1021–1042 (KLRVLWLFGMDLNKKTHRRMAA).

The protein belongs to the NLRP family. Interacts (via pyrin domain) with ASC. Interacts (via pyrin domain) with FAF1 (via UBA domain). Interacts with MAP3K14; this interaction promotes proteasomal degradation of MAP3K14. Interacts with NOD2; this interaction promotes degradation of NOD2 through the ubiquitin-proteasome pathway. Interacts with HSPA1A and HSPA8. Interacts with HSP90AA1. Interacts with TRIM25; this interaction inhibits RIGI-mediated signaling pathway. In terms of tissue distribution, mainly expressed in dendritic cells (DCs) and neutrophils.

The protein resides in the cytoplasm. Its function is as follows. Plays an essential role as an potent mitigator of inflammation. Primarily expressed in dendritic cells and macrophages, inhibits both canonical and non-canonical NF-kappa-B and ERK activation pathways. Functions as a negative regulator of NOD2 by targeting it to degradation via the proteasome pathway. In turn, promotes bacterial tolerance. Also inhibits the RIGI-mediated immune signaling against RNA viruses by reducing the E3 ubiquitin ligase TRIM25-mediated 'Lys-63'-linked RIGI activation but enhancing the E3 ubiquitin ligase RNF125-mediated 'Lys-48'-linked RIGI degradation. Also acts as a negative regulator of inflammatory response to mitigate obesity and obesity-associated diseases in adipose tissue. In Mus musculus (Mouse), this protein is NACHT, LRR and PYD domains-containing protein 12 (Nlrp12).